The primary structure comprises 484 residues: Aspartyl/glutamyl-tRNA(Asn/Gln) amidotransferase subunit B (484 aa).

It belongs to the GatB/GatE family. GatB subfamily. Heterotrimer of A, B and C subunits.

It carries out the reaction L-glutamyl-tRNA(Gln) + L-glutamine + ATP + H2O = L-glutaminyl-tRNA(Gln) + L-glutamate + ADP + phosphate + H(+). The catalysed reaction is L-aspartyl-tRNA(Asn) + L-glutamine + ATP + H2O = L-asparaginyl-tRNA(Asn) + L-glutamate + ADP + phosphate + 2 H(+). Allows the formation of correctly charged Asn-tRNA(Asn) or Gln-tRNA(Gln) through the transamidation of misacylated Asp-tRNA(Asn) or Glu-tRNA(Gln) in organisms which lack either or both of asparaginyl-tRNA or glutaminyl-tRNA synthetases. The reaction takes place in the presence of glutamine and ATP through an activated phospho-Asp-tRNA(Asn) or phospho-Glu-tRNA(Gln). The protein is Aspartyl/glutamyl-tRNA(Asn/Gln) amidotransferase subunit B of Dechloromonas aromatica (strain RCB).